We begin with the raw amino-acid sequence, 257 residues long: Zinc import ATP-binding protein ZnuC (257 aa).

The ABC transporter domain occupies 5-220; the sequence is VELQSVTVTF…PSYVALFGQQ (216 aa). 37-44 is an ATP binding site; that stretch reads GPNGAGKS. Residues 234–257 form a disordered region; the sequence is HEHDLAGSPVGPCQHNKQHGHDNA.

The protein belongs to the ABC transporter superfamily. Zinc importer (TC 3.A.1.15.5) family. In terms of assembly, the complex is composed of two ATP-binding proteins (ZnuC), two transmembrane proteins (ZnuB) and a solute-binding protein (ZnuA).

It is found in the cell inner membrane. The catalysed reaction is Zn(2+)(out) + ATP(in) + H2O(in) = Zn(2+)(in) + ADP(in) + phosphate(in) + H(+)(in). Its function is as follows. Part of the ABC transporter complex ZnuABC involved in zinc import. Responsible for energy coupling to the transport system. The polypeptide is Zinc import ATP-binding protein ZnuC (Photobacterium profundum (strain SS9)).